Reading from the N-terminus, the 346-residue chain is Zinc transporter YKE4 (346 aa).

The Extracellular segment spans residues 1–2 (MK). A helical transmembrane segment spans residues 3–23 (ASHICSYLLSIAPLVVSHGVH). Over 24-69 (HNRDHGHEANHESKQSFLILKQESIFYSLVCFLQNHLFVLGPRYNA) the chain is Cytoplasmic. The helical transmembrane segment at 70-90 (IVAILIIQLMPCLFVLFVPGL) threads the bilayer. Residues 91–99 (RKNDRASLT) lie on the Extracellular side of the membrane. The helical transmembrane segment at 100 to 120 (LSLLVSFSLGTLLGDILLHVI) threads the bilayer. Topologically, residues 121-126 (PESLSG) are cytoplasmic. A helical membrane pass occupies residues 127 to 147 (VTDVTMVGGAIFLGFISFLTL). Topologically, residues 148-202 (DKTMRILSGTSNDDGSIHSHSHSHTPQQTAEKKAGFNMSAYLNVISGIAHHITDG) are extracellular. A glycan (N-linked (GlcNAc...) asparagine) is linked at Asn184. A helical membrane pass occupies residues 203 to 223 (IALATSFYSSTQVGIMTSIAV). Topologically, residues 224–252 (TFHEIPHELGDFAILLSSGFTFPQAIRAQ) are cytoplasmic. The helical transmembrane segment at 253–273 (AVTAFGAVVGTSIGCWMNEIG) threads the bilayer. Asn274 and Asn285 each carry an N-linked (GlcNAc...) asparagine glycan. The Extracellular segment spans residues 274 to 290 (NNSHKATSSSANASELM). Residues 291–311 (LPFTAGGLIYIATTSVVPQIL) traverse the membrane as a helical segment. Over 312–322 (HSSAPDSKLRE) the chain is Cytoplasmic. A helical transmembrane segment spans residues 323 to 343 (FKKWALQLVFIFVGFAVMALM). Topologically, residues 344 to 346 (DEH) are extracellular.

Belongs to the ZIP transporter (TC 2.A.5) family. KE4/Catsup subfamily.

Its subcellular location is the endoplasmic reticulum membrane. In terms of biological role, zinc transporter whose role depends on the zinc status of the cells. It helps to balance zinc levels between the cytosol and the secretory pathway. It transports zinc into the secretory pathway in a zinc-adequate environment and in a high zinc medium. In high zinc medium, transport of zinc into the secretory pathway is a way to eliminate zinc from the cytosol. Under low cytosolic zinc conditions, it removes zinc from the secretory pathway and acts as a zinc importer that helps to alleviate ER stress. The polypeptide is Zinc transporter YKE4 (YKE4) (Saccharomyces cerevisiae (strain ATCC 204508 / S288c) (Baker's yeast)).